Consider the following 247-residue polypeptide: Carboxy-S-adenosyl-L-methionine synthase (247 aa).

S-adenosyl-L-methionine contacts are provided by residues Tyr-39, 64–66, 89–90, 117–118, Asn-132, and Arg-199; these read GCS, DN, and DI.

Belongs to the class I-like SAM-binding methyltransferase superfamily. Cx-SAM synthase family. As to quaternary structure, homodimer.

It catalyses the reaction prephenate + S-adenosyl-L-methionine = carboxy-S-adenosyl-L-methionine + 3-phenylpyruvate + H2O. Catalyzes the conversion of S-adenosyl-L-methionine (SAM) to carboxy-S-adenosyl-L-methionine (Cx-SAM). This chain is Carboxy-S-adenosyl-L-methionine synthase, found in Klebsiella pneumoniae subsp. pneumoniae (strain ATCC 700721 / MGH 78578).